The chain runs to 264 residues: Glutamate racemase (264 aa).

Residues 11 to 12 (DS) and 43 to 44 (YG) contribute to the substrate site. The active-site Proton donor/acceptor is Cys-74. 75-76 (NT) is a binding site for substrate. The Proton donor/acceptor role is filled by Cys-193. Position 194-195 (194-195 (TH)) interacts with substrate.

Belongs to the aspartate/glutamate racemases family.

It catalyses the reaction L-glutamate = D-glutamate. It participates in cell wall biogenesis; peptidoglycan biosynthesis. In terms of biological role, provides the (R)-glutamate required for cell wall biosynthesis. The chain is Glutamate racemase from Bifidobacterium longum subsp. infantis (strain ATCC 15697 / DSM 20088 / JCM 1222 / NCTC 11817 / S12).